The sequence spans 275 residues: NH(3)-dependent NAD(+) synthetase (275 aa).

46-53 is an ATP binding site; the sequence is GISGGQDS. Residue D52 participates in Mg(2+) binding. A deamido-NAD(+)-binding site is contributed by R141. Position 161 (T161) interacts with ATP. E166 is a binding site for Mg(2+). The deamido-NAD(+) site is built by K174 and D181. Positions 190 and 212 each coordinate ATP. Residue 261 to 262 participates in deamido-NAD(+) binding; that stretch reads HK.

Belongs to the NAD synthetase family. As to quaternary structure, homodimer.

The enzyme catalyses deamido-NAD(+) + NH4(+) + ATP = AMP + diphosphate + NAD(+) + H(+). The protein operates within cofactor biosynthesis; NAD(+) biosynthesis; NAD(+) from deamido-NAD(+) (ammonia route): step 1/1. Its function is as follows. Catalyzes the ATP-dependent amidation of deamido-NAD to form NAD. Uses ammonia as a nitrogen source. The polypeptide is NH(3)-dependent NAD(+) synthetase (Limosilactobacillus reuteri (strain DSM 20016) (Lactobacillus reuteri)).